Here is a 377-residue protein sequence, read N- to C-terminus: Flagellar P-ring protein (377 aa).

The signal sequence occupies residues 1–33 (MRYPVSTGIAAPAWFAFFCAWAGLWTFSLPVQA).

Belongs to the FlgI family. The basal body constitutes a major portion of the flagellar organelle and consists of four rings (L,P,S, and M) mounted on a central rod.

It localises to the periplasm. Its subcellular location is the bacterial flagellum basal body. Assembles around the rod to form the L-ring and probably protects the motor/basal body from shearing forces during rotation. In Nitrosospira multiformis (strain ATCC 25196 / NCIMB 11849 / C 71), this protein is Flagellar P-ring protein.